A 288-amino-acid chain; its full sequence is Carbon monoxide dehydrogenase medium chain (288 aa).

The region spanning 1–177 (MIPGSFDYHR…TAIRIPVPPT (177 aa)) is the FAD-binding PCMH-type domain. FAD-binding positions include 32 to 36 (AGGHS) and 111 to 115 (TIGGN).

As to quaternary structure, dimer of heterotrimers. Each heterotrimer consists of a large, a medium and a small subunit. It depends on FAD as a cofactor.

The enzyme catalyses CO + a quinone + H2O = a quinol + CO2. Functionally, catalyzes the oxidation of carbon monoxide to carbon dioxide. This Afipia carboxidovorans (strain ATCC 49405 / DSM 1227 / KCTC 32145 / OM5) (Oligotropha carboxidovorans) protein is Carbon monoxide dehydrogenase medium chain (coxM).